Reading from the N-terminus, the 341-residue chain is tRNA N6-adenosine threonylcarbamoyltransferase (341 aa).

Residues His114 and His118 each coordinate Fe cation. Substrate is bound by residues 136–140 (LVSGG), Asp169, Gly182, Asp186, and Asn278. Residue Asp304 participates in Fe cation binding.

This sequence belongs to the KAE1 / TsaD family. Fe(2+) is required as a cofactor.

It is found in the cytoplasm. It carries out the reaction L-threonylcarbamoyladenylate + adenosine(37) in tRNA = N(6)-L-threonylcarbamoyladenosine(37) in tRNA + AMP + H(+). In terms of biological role, required for the formation of a threonylcarbamoyl group on adenosine at position 37 (t(6)A37) in tRNAs that read codons beginning with adenine. Is involved in the transfer of the threonylcarbamoyl moiety of threonylcarbamoyl-AMP (TC-AMP) to the N6 group of A37, together with TsaE and TsaB. TsaD likely plays a direct catalytic role in this reaction. The sequence is that of tRNA N6-adenosine threonylcarbamoyltransferase from Lactococcus lactis subsp. cremoris (strain MG1363).